We begin with the raw amino-acid sequence, 221 residues long: Protein lethal(2)k10201 (221 aa).

2 consecutive C2H2-type zinc fingers follow at residues 74–97 (YSCV…TEQH) and 113–138 (FSCF…IITH). The segment at 146–168 (FDHSKNRGKQKHQGKSKPNSMEV) is disordered. The span at 151–160 (NRGKQKHQGK) shows a compositional bias: basic residues.

In terms of biological role, vital for development. The protein is Protein lethal(2)k10201 (l(2)k10201) of Drosophila melanogaster (Fruit fly).